The primary structure comprises 385 residues: GDP-mannose-dependent alpha-(1-6)-phosphatidylinositol monomannoside mannosyltransferase (385 aa).

Arg-205, Lys-210, Val-262, and Glu-299 together coordinate GDP-alpha-D-mannose.

This sequence belongs to the glycosyltransferase group 1 family. Glycosyltransferase 4 subfamily.

The enzyme catalyses a 1,2-diacyl-sn-glycero-3-phospho-[alpha-D-mannopyranosyl-(1&lt;-&gt;6)-D-myo-inositol] + GDP-alpha-D-mannose = a 2,6-O-bis(alpha-D-mannopyranosyl)-1-phosphatidyl-1D-myo-inositol + GDP + H(+). It catalyses the reaction a 1,2-diacyl-sn-glycero-3-phospho-[alpha-D-6-acyl-mannopyranosyl-(1&lt;-&gt;6)-D-myo-inositol] + GDP-alpha-D-mannose = a 2-O-(alpha-D-mannosyl)-6-O-(6-O-acyl-alpha-D-mannosyl)-1-phosphatidyl-1D-myo-inositol + GDP + H(+). Its pathway is phospholipid metabolism; phosphatidylinositol metabolism. Involved in the biosynthesis of phosphatidyl-myo-inositol mannosides (PIM) which are early precursors in the biosynthesis of lipomannans (LM) and lipoarabinomannans (LAM). Catalyzes the addition of a mannosyl residue from GDP-D-mannose (GDP-Man) to the position 6 of a phosphatidyl-myo-inositol bearing an alpha-1,2-linked mannose residue (PIM1) to generate phosphatidyl-myo-inositol bearing alpha-1,2- and alpha-1,6-linked mannose residues (Ac1PIM2). PimB also catalyzes the addition of a mannosyl residue from GDP-Man to the position 6 of phosphatidyl-myo-inositol bearing an acylated alpha-1,2-linked mannose residue (Ac1PIM1) to generate monoacylated phosphatidyl-myo-inositol bearing alpha-1,2- and alpha-1,6-linked mannose residues (Ac1PIM2). The addition of the second mannosyl residue by PimB preferentially occurs before the acylation of the mannosyl residue transferred by PimA. Also able to transfer a mannosyl residue from GDP-Man to the position 6 of a phosphatidyl-myo-inositol (PI), but this reaction is very slow. The protein is GDP-mannose-dependent alpha-(1-6)-phosphatidylinositol monomannoside mannosyltransferase of Mycobacterium tuberculosis (strain CDC 1551 / Oshkosh).